A 205-amino-acid polypeptide reads, in one-letter code: Guanylyl cyclase-activating protein 1 (205 aa).

Residue Gly-2 is the site of N-myristoyl glycine attachment. Asn-3 bears the Deamidated asparagine mark. 4 consecutive EF-hand domains span residues 14–49 (SSTECHQWYKKFMTECPSGQLTLYEFRQFFGLKNLS), 51–86 (WASQYVEQMFETFDFNKDGYIDFMEYVAALSLVLKG), 87–122 (KVEQKLRWYFKLYDVDGNGCIDRDELLTIIRAIRAI), and 131–166 (TAEEFTDTVFSKIDVNGDGELSLEEFMEGVQKDQML). Residues Asp-64, Asn-66, Asp-68, Tyr-70, Glu-75, Asp-100, Asp-102, Asn-104, Cys-106, Glu-111, Asp-144, Asn-146, Asp-148, Glu-150, and Glu-155 each contribute to the Ca(2+) site. Residues 185–205 (NGEQDEEGASGRETEAAEADG) form a disordered region.

Homodimer. As to expression, detected in the retina. Detected in rod and cone photoreceptor cells (at protein level). Also present in certain pinealocytes.

It localises to the membrane. The protein localises to the photoreceptor inner segment. The protein resides in the cell projection. Its subcellular location is the cilium. It is found in the photoreceptor outer segment. Its function is as follows. Stimulates retinal guanylyl cyclase when free calcium ions concentration is low and inhibits guanylyl cyclase when free calcium ions concentration is elevated. This Ca(2+)-sensitive regulation of retinal guanylyl cyclase is a key event in recovery of the dark state of rod photoreceptors following light exposure. May be involved in cone photoreceptor light response and recovery of response in bright light. In Bos taurus (Bovine), this protein is Guanylyl cyclase-activating protein 1 (GUCA1A).